A 120-amino-acid chain; its full sequence is Large ribosomal subunit protein uL18 (120 aa).

This sequence belongs to the universal ribosomal protein uL18 family. As to quaternary structure, part of the 50S ribosomal subunit; part of the 5S rRNA/L5/L18/L25 subcomplex. Contacts the 5S and 23S rRNAs.

In terms of biological role, this is one of the proteins that bind and probably mediate the attachment of the 5S RNA into the large ribosomal subunit, where it forms part of the central protuberance. The protein is Large ribosomal subunit protein uL18 of Rhizobium etli (strain CIAT 652).